We begin with the raw amino-acid sequence, 241 residues long: NH(3)-dependent NAD(+) synthetase (241 aa).

Residue 29-36 (GISGGIDS) coordinates ATP. Residue Asp-35 coordinates Mg(2+). A deamido-NAD(+)-binding site is contributed by Arg-110. Glu-135 lines the Mg(2+) pocket. Residues Lys-143 and Asp-150 each contribute to the deamido-NAD(+) site. 2 residues coordinate ATP: Lys-159 and Ser-181. 226–227 (HK) lines the deamido-NAD(+) pocket.

It belongs to the NAD synthetase family. In terms of assembly, homodimer.

It catalyses the reaction deamido-NAD(+) + NH4(+) + ATP = AMP + diphosphate + NAD(+) + H(+). It functions in the pathway cofactor biosynthesis; NAD(+) biosynthesis; NAD(+) from deamido-NAD(+) (ammonia route): step 1/1. Its function is as follows. Catalyzes the ATP-dependent amidation of deamido-NAD to form NAD. Uses ammonia as a nitrogen source. This chain is NH(3)-dependent NAD(+) synthetase, found in Finegoldia magna (strain ATCC 29328 / DSM 20472 / WAL 2508) (Peptostreptococcus magnus).